An 800-amino-acid chain; its full sequence is Internalin A (800 aa).

An N-terminal signal peptide occupies residues 1–35 (MRKKRYVWLKSILVAILVFGSGVWINTSNGTNAQA). The LRRNT domain maps to 36–76 (ATITQDTPINQIFTDTALAEKMKTVLGKTNVTDTVSQTDLD). LRR repeat units lie at residues 77-98 (QVTT…EYLN), 99-120 (NLTQ…KNLT), 121-142 (KLVD…ANLT), 143-164 (NLTG…KNLT), 165-186 (NLNR…SGLT), 187-207 (SLQQ…ANLT), 208-229 (TLER…AKLT), 230-251 (NLES…GILT), 252-273 (NLDE…ASLT), 274-295 (NLTD…SGLT), 296-317 (KLTE…AGLT), 318-339 (ALTN…SNLK), 340-361 (NLTY…SSLT), 362-383 (KLQR…ANLT), and 384-405 (NINW…ANLT). Residues 416–505 (AWTNAPVNYK…AIFNVKFHVD (90 aa)) enclose the LRRCT domain. The stretch at 518–587 (LLTEPAKPVK…TTSQTVDYQG (70 aa)) is one B-1 repeat. A 3 X approximate tandem repeats, type B region spans residues 518 to 706 (LLTEPAKPVK…ITLYAQFTKN (189 aa)). One copy of the B-2 repeat lies at 588 to 657 (LLQEPTAPTK…STTQAVDYQG (70 aa)). One copy of the B-3 repeat lies at 658–706 (LLKEPKAPTKAGYTFKGWYDEKTDGKKWDFATDKMPANDITLYAQFTKN). Residues 705 to 757 (KNPVAPPTTGGNTPPTTNNGGNTTPPSANIPGSDTSNTSTGNSASTTSTMNAY) are disordered. The span at 711 to 753 (PTTGGNTPPTTNNGGNTTPPSANIPGSDTSNTSTGNSASTTST) shows a compositional bias: low complexity. The LPXTG sorting signal signature appears at 767–771 (LPTTG). A Pentaglycyl murein peptidoglycan amidated threonine modification is found at T770. Residues 771-800 (GDSDNALYLLLGLLAVGTAMALTKKARASK) constitute a propeptide, removed by sortase A.

It belongs to the internalin family. Interacts with host (human) cadherin-1 (CDH1). The formation of the complex between inlA and cadherin-1 is calcium-dependent. Mutagenesis studies show it is possible to increase the affinity of InlA for CDH1 by rational engineering of InlA residues.

The protein resides in the secreted. It is found in the cell wall. Bacterial uptake is inhibited by EDTA and by anti-E-cadherin antibodies. Its function is as follows. Mediates the entry of L.monocytogenes into host intestinal epithelial cells; transformation with inlA alone allows L.innocua (a non-invasive species) to be taken up by host cells. Binds to human receptor cadherin-1 (E-cadherin, CDH1); the chicken homolog of cadherin-1 but not cadherin-2 function as receptors. Mouse cadherin-1 is not a receptor, however mutating a single surface-exposed residue (Glu-172 to Pro in mouse) allows cadherin-1 to act as a receptor for InlA. The chain is Internalin A from Listeria monocytogenes serovar 1/2a (strain ATCC BAA-679 / EGD-e).